Reading from the N-terminus, the 300-residue chain is MGPYLSQPKREKVTTSGEGKSVIFAASEMQGWRNTMEDAHIHRPDIVQDVSVFGVFDGHGGREVAQFVEKHFIDELLKNKNFKEQKFEDALKETFLKMDELLMTPEGAKELNNYKATDTDESYAGCTANVALIHKNTLYVANAGDSRSVLCRNNTNFDMSVDHKPDNNEEKSRIERAGGFVSDGRVNGNLNLSRALGDLEYKSDSKLRPNEQLIIAFPDVKKTELTPQDKFILMGCDGVFETLNHQELLKHVNTTLGNSPVTENLLSKAAEDLLDQLLAPDTSQGTGCDNMTTILVYLKK.

The 276-residue stretch at 23-298 folds into the PPM-type phosphatase domain; it reads IFAASEMQGW…DNMTTILVYL (276 aa). Mn(2+)-binding residues include D57, G58, D237, and D289.

The protein belongs to the PP2C family. Requires Mg(2+) as cofactor. It depends on Mn(2+) as a cofactor.

Its subcellular location is the membrane. The enzyme catalyses O-phospho-L-seryl-[protein] + H2O = L-seryl-[protein] + phosphate. It carries out the reaction O-phospho-L-threonyl-[protein] + H2O = L-threonyl-[protein] + phosphate. Enzyme with a broad specificity. In Paramecium tetraurelia, this protein is Probable protein phosphatase 2C 3.